The chain runs to 465 residues: ATP-dependent protease ATPase subunit HslU (465 aa).

Residues Val20, 62–67, Asp277, Glu343, and Arg415 contribute to the ATP site; that span reads GVGKTE.

Belongs to the ClpX chaperone family. HslU subfamily. A double ring-shaped homohexamer of HslV is capped on each side by a ring-shaped HslU homohexamer. The assembly of the HslU/HslV complex is dependent on binding of ATP.

It is found in the cytoplasm. Functionally, ATPase subunit of a proteasome-like degradation complex; this subunit has chaperone activity. The binding of ATP and its subsequent hydrolysis by HslU are essential for unfolding of protein substrates subsequently hydrolyzed by HslV. HslU recognizes the N-terminal part of its protein substrates and unfolds these before they are guided to HslV for hydrolysis. This chain is ATP-dependent protease ATPase subunit HslU, found in Geobacillus kaustophilus (strain HTA426).